A 331-amino-acid polypeptide reads, in one-letter code: DSC E3 ubiquitin ligase complex subunit D (331 aa).

Residue asparagine 26 is glycosylated (N-linked (GlcNAc...) asparagine). Transmembrane regions (helical) follow at residues 63–83 (ILIY…ILFA), 107–127 (PFIG…NFFT), and 159–179 (LFLL…LIVE). Residues 197 to 214 (VQDHDSEERGVHRTRPES) are compositionally biased toward basic and acidic residues. The tract at residues 197–225 (VQDHDSEERGVHRTRPESRSSVVGAELDE) is disordered.

In terms of assembly, component of the DSC E3 ubiquitin ligase complex composed of dscA, dscB, dscC and dscD.

The protein localises to the endoplasmic reticulum membrane. It functions in the pathway protein modification; protein ubiquitination. Component of the DSC E3 ubiquitin ligase complex which is required for the srbA transcriptional activator proteolytic cleavage to release the soluble transcription factor from the membrane in low oxygen or sterol conditions. Required for growth during hypoxia and triazole drug susceptibility, as well as for virulence in a murine model of invasive pulmonary aspergillosis (IPA). This Aspergillus fumigatus (strain CBS 144.89 / FGSC A1163 / CEA10) (Neosartorya fumigata) protein is DSC E3 ubiquitin ligase complex subunit D.